Consider the following 95-residue polypeptide: CRISPR-associated endoribonuclease Cas2 1 (95 aa).

Aspartate 11 is a Mg(2+) binding site.

Belongs to the CRISPR-associated endoribonuclease Cas2 protein family. As to quaternary structure, homodimer, forms a heterotetramer with a Cas1 homodimer. Requires Mg(2+) as cofactor.

Its function is as follows. CRISPR (clustered regularly interspaced short palindromic repeat), is an adaptive immune system that provides protection against mobile genetic elements (viruses, transposable elements and conjugative plasmids). CRISPR clusters contain sequences complementary to antecedent mobile elements and target invading nucleic acids. CRISPR clusters are transcribed and processed into CRISPR RNA (crRNA). Functions as a ssRNA-specific endoribonuclease. Involved in the integration of spacer DNA into the CRISPR cassette. The protein is CRISPR-associated endoribonuclease Cas2 1 of Methanospirillum hungatei JF-1 (strain ATCC 27890 / DSM 864 / NBRC 100397 / JF-1).